An 86-amino-acid chain; its full sequence is Small ribosomal subunit protein bS20 (86 aa).

It belongs to the bacterial ribosomal protein bS20 family.

Its function is as follows. Binds directly to 16S ribosomal RNA. The sequence is that of Small ribosomal subunit protein bS20 from Rhodococcus opacus (strain B4).